The primary structure comprises 852 residues: MRPERLTVRNFLGLKNVDIEFQSGITVVEGPNGAGKSSLFEAISFALFGNGIRYPNSYDYVNRNAVDGTARLVFQFERGGKRYEIIREINALQRKHNAKLSEILENGKKAAIAAKPTSVKQEVEKILGIEHRTFIRTVFLPQGEIDKLLISPPSEITEIISDVFQSKETLEKLEKLLKEKMKKLENEISSLQALYTAIWKYLEENDLEVLKSELKTVSEKKKELLKKREELQKEEEQLKRLLEKYRELVKKKERLRVLSLRRNELQKEVIYEQKVKKAKELEPLFREIYLRQREFERFSQELNSREKRYKELESEKEAISKEIPVHRERLSKLEEIGEKIKEELDLLEKVLKASRPLLEQRIRLKENLTRLEEEFRRLVGEKEKREKELLSIEKTENETKNELEKLLDELSILKKDHMKWLAYQIASSLNEGDTCPVCGGVFHGKVEAVEFNIDEFEKLDQKRSELENTLNVLKERKKSLSSLIEDLLMKIEEGKKNLKSIRNQIEKIEEELHRLGYSEDLEEKLDEKRKKLRKIEEERHSISQKITAADVQISQIENQLKEIKGEIEAKRETLKEQREEMDQLKSDFFDRLRKIGIGFEEFRILVKEEVKDAEKELGVVETEIRLLEESLKELESENVRDVSEDYEKVRNQLEALSQEISDLERKEGRLNHLIEETLRRERELKSLEKKLKEMSDEYNNLDLLRKYLFDKSNFSRYFTGRVLEAVLKRTKAYLDILTNGRFDIDFDDEKGGFIIKDWGIERPARGLSGGERALISISLAMSLAEVASGRLDAFFIDEGFSSLDTENKEKIASVLKELERLNKVIVFITHDREFSEAFDRKLRITGGVVVNE.

ATP-binding residues include asparagine 32, glycine 33, alanine 34, glycine 35, lysine 36, serine 37, serine 38, arginine 53, tyrosine 54, aspartate 59, valine 61, and arginine 63. Residue serine 37 participates in Mg(2+) binding. Residue glutamine 142 coordinates Mg(2+). 2 coiled-coil regions span residues glutamate 155–aspartate 345 and leucine 389–serine 427. The region spanning leucine 389–leucine 488 is the Zinc-hook domain. Zn(2+) contacts are provided by cysteine 435 and cysteine 438. Coiled coils occupy residues aspartate 460–leucine 488 and lysine 534–lysine 711. Residue aspartate 797 coordinates Mg(2+).

This sequence belongs to the SMC family. RAD50 subfamily. In terms of assembly, homodimer. Forms a complex with Mre11. The cofactor is Zn(2+).

The catalysed reaction is ATP + H2O = ADP + phosphate + H(+). Its function is as follows. Involved in DNA double-strand break repair (DSBR). The Rad50/Mre11 complex possesses single-strand endonuclease activity and ATP-dependent double-strand-specific 3'-5' exonuclease activity. Rad50 provides an ATP-dependent control of Mre11 by positioning DNA ends into the Mre11 active site: ATP-binding induces a large structural change from an open form with accessible Mre11 nuclease sites into a closed form. This chain is DNA double-strand break repair Rad50 ATPase, found in Thermotoga maritima (strain ATCC 43589 / DSM 3109 / JCM 10099 / NBRC 100826 / MSB8).